The primary structure comprises 32 residues: Dermaseptin-DA4 (32 aa).

In terms of tissue distribution, expressed by the skin glands.

It localises to the secreted. It is found in the target cell membrane. Antimicrobial peptide with activity against Gram-negative bacteria, but not against Gram-positive bacteria. Active against E.coli (MIC=5 uM), and P.aeruginosa (MIC=40 uM). Acts by disrupting cell membranes. Is able to depolarize membranes of Gram-positive and Gram-negative bacteria. Also acts as a potent chemoattractant for human leukocytes and activates them mainly through a GPCR, possibly FPRL1 coupled to the ERK1/2 MAPK pathway. Is unstructured in water but become helical upon binding to anionic lipids. In contrast to most dermaseptins, is not structured in the presence of zwitterionic lipids. Does not show hemolytic activity. The polypeptide is Dermaseptin-DA4 (Agalychnis dacnicolor (Giant Mexican leaf frog)).